A 77-amino-acid polypeptide reads, in one-letter code: Ras-related C3 botulinum toxin substrate 1 (77 aa).

GTP is bound at residue 22–24 (KLD). K53 is covalently cross-linked (Glycyl lysine isopeptide (Lys-Gly) (interchain with G-Cter in ubiquitin)). GTP is bound at residue 65–66 (AL).

Belongs to the small GTPase superfamily. Rho family. Interacts with NISCH. Interacts with PIP5K1A. Interacts with the GTP-bound form of RAB7A. Interacts with SRGAP2. Interacts with CYFIP1/SRA-1. Interacts with PLXNB3. Interacts with ARHGDIA; the interaction is induced by SEMA5A, mediated through PLXNB3 and inactivates and stabilizes RAC1. Interacts (GTP-bound form preferentially) with PKN2 (via the REM repeats); the interaction stimulates autophosphorylation and phosphorylation of PKN2. Interacts with the GEF proteins PREX1, RASGRF2, FARP1, FARP2, DOCK1, DOCK2 and DOCK7, which promote the exchange between GDP and GTP, and therefore activate it. Interacts with PARD6A, PARD6B and PARD6G in a GTP-dependent manner. Part of a quaternary complex containing PARD3, some PARD6 protein (PARD6A, PARD6B or PARD6G) and some atypical PKC protein (PRKCI or PRKCZ), which plays a central role in epithelial cell polarization. Found in a trimeric complex composed of DOCK1 and ELMO1, which plays a central role in phagocytosis of apoptotic cells. Interacts with RALBP1 via its effector domain. Interacts with PLXNB1. Part of a complex with MAP2K3, MAP3K3, CCM2 and DEF6. Interacts with BAIAP2, BAIAP2L1 and DEF6. Interacts with Y.pseudotuberculosis YPKA and PLCB2. Interacts with NOXA1. Interacts with ARHGEF2. Interacts with TBC1D2. Interacts with UNKL. Interacts with USP6. Interacts with SPATA13. Interacts with ARHGEF16; mediates activation of RAC1 by EPHA2. Interacts with ITGB4. Interacts with S100A8 and calprotectin (S100A8/9). Interacts with PACSIN2. Interacts (when active) with PPP5C (via TPR repeats); activates PPP5C phosphatase activity and translocates PPP5C to the cell membrane. Interacts with RAPH1 (via Ras associating and PH domains). Interacts with MTSS2 (via IMD domain); this interaction may be important to potentiate PDGF-induced RAC1 activation. Interacts with PAK2. Interacts (GTP-bound form) with SH3RF1 and SH3RF3. Found in a complex with SH3RF1, MAPK8IP1/JIP1, MAP3K11/MLK3, MAP2K7/MKK7 and MAPK8/JNK1. Interacts (both active GTP- or inactive GDP-bound forms) with SH3RF2. Interacts (GTP-bound form preferentially) with CYRIB. Interacts with DOCK4 (via DOCKER domain); functions as a guanine nucleotide exchange factor (GEF) for RAC1. Interacts with GARRE1. Interacts with RAP1GDS1. May interact with ARHGAP36. Interacts with DSG3; the interaction is required for DSG3 translocation to cell-cell junctions, organization of cortical F-actin bundles and actin anchoring at cell-cell junctions. Component of the phagocyte NADPH oxidase complex composed of an obligatory core heterodimer formed by the membrane proteins CYBA and CYBB and the cytosolic regulatory subunits NCF1/p47-phox, NCF2/p67-phox, NCF4/p40-phox and the small GTPase RAC1 or RAC2. Interacts with NCF2. The N-terminus is blocked. Post-translationally, GTP-bound active form is ubiquitinated by HACE1, leading to its degradation by the proteasome.

The protein resides in the cytoplasm. It is found in the membrane. The protein localises to the melanosome. It localises to the cell projection. Its subcellular location is the lamellipodium. The protein resides in the dendrite. It is found in the synapse. The protein localises to the nucleus. It carries out the reaction GTP + H2O = GDP + phosphate + H(+). With respect to regulation, regulated by guanine nucleotide exchange factors (GEFs) which promote the exchange of bound GDP for free GTP, GTPase activating proteins (GAPs) which increase the GTP hydrolysis activity, and GDP dissociation inhibitors which inhibit the dissociation of the nucleotide from the GTPase. GTP hydrolysis is stimulated by ARHGAP30. In terms of biological role, plasma membrane-associated small GTPase which cycles between active GTP-bound and inactive GDP-bound states. In its active state, binds to a variety of effector proteins to regulate cellular responses such as secretory processes, phagocytosis of apoptotic cells, epithelial cell polarization, neurons adhesion, migration and differentiation, and growth-factor induced formation of membrane ruffles. Rac1 p21/rho GDI heterodimer is the active component of the cytosolic factor sigma 1, which is involved in stimulation of the NADPH oxidase activity in macrophages. Essential for the SPATA13-mediated regulation of cell migration and adhesion assembly and disassembly. Stimulates PKN2 kinase activity. In concert with RAB7A, plays a role in regulating the formation of RBs (ruffled borders) in osteoclasts. In podocytes, promotes nuclear shuttling of NR3C2; this modulation is required for a proper kidney functioning. Required for atypical chemokine receptor ACKR2-induced LIMK1-PAK1-dependent phosphorylation of cofilin (CFL1) and for up-regulation of ACKR2 from endosomal compartment to cell membrane, increasing its efficiency in chemokine uptake and degradation. In neurons, is involved in dendritic spine formation and synaptic plasticity. In hippocampal neurons, involved in spine morphogenesis and synapse formation, through local activation at synapses by guanine nucleotide exchange factors (GEFs), such as ARHGEF6/ARHGEF7/PIX. In synapses, seems to mediate the regulation of F-actin cluster formation performed by SHANK3. In neurons, plays a crucial role in regulating GABA(A) receptor synaptic stability and hence GABAergic inhibitory synaptic transmission through its role in PAK1 activation and eventually F-actin stabilization. Required for DSG3 translocation to cell-cell junctions, DSG3-mediated organization of cortical F-actin bundles and anchoring of actin at cell junctions; via interaction with DSG3. Subunit of the phagocyte NADPH oxidase complex that mediates the transfer of electrons from cytosolic NADPH to O2 to produce the superoxide anion (O2(-)). The chain is Ras-related C3 botulinum toxin substrate 1 from Cavia porcellus (Guinea pig).